A 45-amino-acid chain; its full sequence is DVCDSLVGGRCIHNGCWCERSAPHGNCCNTSGCTATFWCPGTLFD.

Cystine bridges form between Cys-3–Cys-16, Cys-11–Cys-28, Cys-18–Cys-33, and Cys-27–Cys-39. Trp-17 carries the 6'-bromotryptophan modification. At Pro-23 the chain carries 4-hydroxyproline. Trp-38 bears the 6'-bromotryptophan mark. Pro-40 is modified (4-hydroxyproline).

As to expression, expressed by the venom duct.

It is found in the secreted. Functionally, mu-conotoxins block voltage-gated sodium channels. This toxin reversibly blocks voltage-gated sodium channel in cephalopods, with no alteration in the voltage dependence of sodium conductance or on the kinetics of inactivation. The protein is Mu-conotoxin-like Cal 12.1.2e of Californiconus californicus (California cone).